We begin with the raw amino-acid sequence, 525 residues long: Phosphoenolpyruvate carboxykinase (ATP) (525 aa).

Residues Arg-54, Tyr-190, and Lys-196 each coordinate substrate. Residues Lys-196, His-215, and 231–239 (GLSGTGKTT) contribute to the ATP site. Mn(2+) is bound by residues Lys-196 and His-215. Asp-252 lines the Mn(2+) pocket. Residues Glu-280, Arg-316, and Thr-441 each coordinate ATP. Arg-316 is a substrate binding site.

The protein belongs to the phosphoenolpyruvate carboxykinase (ATP) family. The cofactor is Mn(2+).

The protein localises to the cytoplasm. It carries out the reaction oxaloacetate + ATP = phosphoenolpyruvate + ADP + CO2. It functions in the pathway carbohydrate biosynthesis; gluconeogenesis. Functionally, involved in the gluconeogenesis. Catalyzes the conversion of oxaloacetate (OAA) to phosphoenolpyruvate (PEP) through direct phosphoryl transfer between the nucleoside triphosphate and OAA. The polypeptide is Phosphoenolpyruvate carboxykinase (ATP) (Nitratiruptor sp. (strain SB155-2)).